The primary structure comprises 199 residues: MVKIGVCGPVGSGKTALIEALTRHMSKDYDMAVITNDIYTKEDAEFMCKNSVMPRERIIGVETGGCPHTAIREDASMNLEAVEEMHGRFPNLELLLIESGGDNLSATFNPELADFTIFVIDVAEGDKIPRKGGPGITRSDLLVINKIDLAPYVGADLKVMERDSKKMRGEKPFIFTNIRAKEGLDDVIAWIKRNALLED.

8 to 15 (GPVGSGKT) is a binding site for GTP.

This sequence belongs to the SIMIBI class G3E GTPase family. UreG subfamily. Homodimer. UreH, UreF and UreG form a complex that acts as a GTP-hydrolysis-dependent molecular chaperone, activating the urease apoprotein by helping to assemble the nickel containing metallocenter of UreC. The UreE protein probably delivers the nickel.

Its subcellular location is the cytoplasm. Facilitates the functional incorporation of the urease nickel metallocenter. This process requires GTP hydrolysis, probably effectuated by UreG. The sequence is that of Urease accessory protein UreG from Helicobacter pylori (strain G27).